The primary structure comprises 67 residues: DNA-directed RNA polymerase subunit omega (67 aa).

The protein belongs to the RNA polymerase subunit omega family. In terms of assembly, the RNAP catalytic core consists of 2 alpha, 1 beta, 1 beta' and 1 omega subunit. When a sigma factor is associated with the core the holoenzyme is formed, which can initiate transcription.

The catalysed reaction is RNA(n) + a ribonucleoside 5'-triphosphate = RNA(n+1) + diphosphate. Its function is as follows. Promotes RNA polymerase assembly. Latches the N- and C-terminal regions of the beta' subunit thereby facilitating its interaction with the beta and alpha subunits. The polypeptide is DNA-directed RNA polymerase subunit omega (rpoZ) (Treponema pallidum (strain Nichols)).